A 257-amino-acid chain; its full sequence is MLFLLSPAKSLDYQTPTRVAATEPLYTRQAADLIEILRTKTPVEVAELMDLSDALAGLNVARYAAWQPQADRHNSKPAVLAFNGDVYDGLDARTLATPDLRWAQSHLVILSGLYGALRPLDALQPYRLEMGTRLANPQGPDLYAWWGDTVSDYLNERQSGEPHPVVVNLASQEYFKVVRRGVLKARVVDCVFEDWKGGVYKIISFHAKRARGLMARYAITQRIRRVADLQGFDLAGYAYAPAVSGPDRLVFRRHPAD.

The protein belongs to the UPF0246 family.

The protein is UPF0246 protein Lcho_2652 of Leptothrix cholodnii (strain ATCC 51168 / LMG 8142 / SP-6) (Leptothrix discophora (strain SP-6)).